The primary structure comprises 121 residues: uncharacterized protein (121 aa).

A compositionally biased stretch (low complexity) spans 12-24 (EEGGASAAAPDAS). Disordered stretches follow at residues 12–63 (EEGG…RLEP) and 101–121 (KKLA…SPVV). The span at 26–35 (KSKKGARPCF) shows a compositional bias: basic residues. Residues 40–49 (QAGSCMTGRQ) are compositionally biased toward polar residues. Basic and acidic residues predominate over residues 112–121 (GSQKERSPVV).

This is an uncharacterized protein from Homo sapiens (Human).